Here is a 160-residue protein sequence, read N- to C-terminus: Ureidoglycolate lyase (160 aa).

This sequence belongs to the ureidoglycolate lyase family. In terms of assembly, homodimer. The cofactor is Ni(2+).

It catalyses the reaction (S)-ureidoglycolate = urea + glyoxylate. It functions in the pathway nitrogen metabolism; (S)-allantoin degradation. In terms of biological role, catalyzes the catabolism of the allantoin degradation intermediate (S)-ureidoglycolate, generating urea and glyoxylate. Involved in the anaerobic utilization of allantoin as sole nitrogen source. Reinforces the induction of genes involved in the degradation of allantoin and glyoxylate by producing glyoxylate. This chain is Ureidoglycolate lyase, found in Escherichia coli (strain SMS-3-5 / SECEC).